Consider the following 343-residue polypeptide: Aspartate-semialdehyde dehydrogenase (343 aa).

NADP(+) contacts are provided by residues 13–16 and 41–42; these read TGAV and KS. Arg103 provides a ligand contact to phosphate. Cys134 functions as the Acyl-thioester intermediate in the catalytic mechanism. A substrate-binding site is contributed by Gln161. Residue 164–165 coordinates NADP(+); it reads SG. Lys220 contacts phosphate. Arg241 contacts substrate. His248 acts as the Proton acceptor in catalysis. Gln321 contributes to the NADP(+) binding site.

It belongs to the aspartate-semialdehyde dehydrogenase family. Homodimer.

The catalysed reaction is L-aspartate 4-semialdehyde + phosphate + NADP(+) = 4-phospho-L-aspartate + NADPH + H(+). Its pathway is amino-acid biosynthesis; L-lysine biosynthesis via DAP pathway; (S)-tetrahydrodipicolinate from L-aspartate: step 2/4. It participates in amino-acid biosynthesis; L-methionine biosynthesis via de novo pathway; L-homoserine from L-aspartate: step 2/3. It functions in the pathway amino-acid biosynthesis; L-threonine biosynthesis; L-threonine from L-aspartate: step 2/5. Catalyzes the NADPH-dependent formation of L-aspartate-semialdehyde (L-ASA) by the reductive dephosphorylation of L-aspartyl-4-phosphate. The chain is Aspartate-semialdehyde dehydrogenase from Campylobacter jejuni subsp. jejuni serotype O:2 (strain ATCC 700819 / NCTC 11168).